Reading from the N-terminus, the 361-residue chain is Mitochondrial import receptor subunit TOM40 homolog (361 aa).

The tract at residues 1–73 is disordered; that stretch reads MGNVLAASSP…GAAAASEDGS (73 aa). The span at 11 to 36 shows a compositional bias: pro residues; it reads PAGPPPPPTPSLVGLPPPPPSPPGFT. A compositionally biased stretch (gly residues) spans 40–50; that stretch reads LGGGLGTGSST. Residues 51 to 69 are compositionally biased toward low complexity; it reads GRGSERTPGAAASGAAAAS.

It belongs to the Tom40 family. In terms of assembly, forms part of the preprotein translocase complex of the outer mitochondrial membrane (TOM complex) which consists of at least 7 different proteins (TOMM5, TOMM6, TOMM7, TOMM20, TOMM22, TOMM40 and TOMM70). Interacts with mitochondrial targeting sequences. Interacts with TIMM29; linking the TIM22 complex to the TOM complex. Forms a complex with BCAP31 (via C-terminus) which mediates the translocation of components of the mitochondrial membrane respiratory chain NADH dehydrogenase (Complex I) from the cytosol to the mitochondria. Interacts (via N-terminus) with CYP1A1 (via mitochondrial targeting signal); this interaction is required for CYP1A1 translocation across the mitochondrial outer membrane.

The protein localises to the mitochondrion outer membrane. Channel-forming protein essential for import of protein precursors into mitochondria. Plays a role in the assembly of the mitochondrial membrane respiratory chain NADH dehydrogenase (Complex I) by forming a complex with BCAP31 and mediating the translocation of Complex I components from the cytosol to the mitochondria. The chain is Mitochondrial import receptor subunit TOM40 homolog (Tomm40) from Mus musculus (Mouse).